We begin with the raw amino-acid sequence, 458 residues long: Phosphomethylpyrimidine synthase (458 aa).

Residues Asn80, Met109, Tyr139, His175, 195 to 197 (SRG), 236 to 239 (DSLR), and Glu275 each bind substrate. His279 contacts Zn(2+). Tyr302 is a substrate binding site. His343 is a Zn(2+) binding site. Residues Cys423, Cys426, and Cys431 each coordinate [4Fe-4S] cluster.

It belongs to the ThiC family. [4Fe-4S] cluster is required as a cofactor.

It carries out the reaction 5-amino-1-(5-phospho-beta-D-ribosyl)imidazole + S-adenosyl-L-methionine = 4-amino-2-methyl-5-(phosphooxymethyl)pyrimidine + CO + 5'-deoxyadenosine + formate + L-methionine + 3 H(+). It functions in the pathway cofactor biosynthesis; thiamine diphosphate biosynthesis. Catalyzes the synthesis of the hydroxymethylpyrimidine phosphate (HMP-P) moiety of thiamine from aminoimidazole ribotide (AIR) in a radical S-adenosyl-L-methionine (SAM)-dependent reaction. In Cyanothece sp. (strain PCC 7425 / ATCC 29141), this protein is Phosphomethylpyrimidine synthase.